The sequence spans 368 residues: DNA replication and repair protein RecF (368 aa).

30–37 (GDNGAGKT) is an ATP binding site.

It belongs to the RecF family.

The protein resides in the cytoplasm. Functionally, the RecF protein is involved in DNA metabolism; it is required for DNA replication and normal SOS inducibility. RecF binds preferentially to single-stranded, linear DNA. It also seems to bind ATP. This chain is DNA replication and repair protein RecF, found in Xanthomonas axonopodis pv. citri (strain 306).